Reading from the N-terminus, the 483-residue chain is Glutamyl-tRNA(Gln) amidotransferase subunit A (483 aa).

Active-site charge relay system residues include lysine 76 and serine 151. Serine 175 serves as the catalytic Acyl-ester intermediate.

It belongs to the amidase family. GatA subfamily. In terms of assembly, heterotrimer of A, B and C subunits.

The enzyme catalyses L-glutamyl-tRNA(Gln) + L-glutamine + ATP + H2O = L-glutaminyl-tRNA(Gln) + L-glutamate + ADP + phosphate + H(+). Allows the formation of correctly charged Gln-tRNA(Gln) through the transamidation of misacylated Glu-tRNA(Gln) in organisms which lack glutaminyl-tRNA synthetase. The reaction takes place in the presence of glutamine and ATP through an activated gamma-phospho-Glu-tRNA(Gln). The sequence is that of Glutamyl-tRNA(Gln) amidotransferase subunit A from Ectopseudomonas mendocina (strain ymp) (Pseudomonas mendocina).